The primary structure comprises 618 residues: MPIQVLPPQLANQIAAGEVVERPASVVKELVENSLDAGATRVDIDIERGGAKLIRIRDNGCGIKKEELALALARHATSKIASLDDLEAIISLGFRGEALASISSVSRLTLTSRTAEQAEAWQAYAEGRDMDVTVKPAAHPVGTTLEVLDLFYNTPARRKFMRTEKTEFNHIDEIIRRIALARFDVTLNLSHNGKLVRQYRAVAKDGQKERRLGAICGTPFLEQALAIEWQHGDLTLRGWVADPNHTTTALTEIQYCYVNGRMMRDRLINHAIRQACEDKLGADQQPAFVLYLEIDPHQVDVNVHPAKHEVRFHQSRLVHDFIYQGVLSVLQQQTETTLPLEEIAPAPRHVPENRIAAGRNHFAVPAEPTAAREPATPRYSDGASGGNGGRQSAGGWPHAQPGYQKQQGEVYRTLLQTPTTSPAPEPVAPALDGHSQSFGRVLTIVGGDCALLEHAGTIQLLSLPVAERWLRQAQLTPGQSPVCAQPLLIPLRLKVSADEKAALQKAQSLLGELGIEFQSDAQHVTIRAVPLPLRQQNLQILIPELIGYLAQQTTFATVNIAQWIARNVQSEHPQWSMAQAISLLADVERLCPQLVKAPPGGLLQPVDLHSAMNALKHE.

Residues 366-378 (AEPTAAREPATPR) are compositionally biased toward low complexity. The tract at residues 366 to 403 (AEPTAAREPATPRYSDGASGGNGGRQSAGGWPHAQPGY) is disordered. The span at 383–392 (ASGGNGGRQS) shows a compositional bias: gly residues.

The protein belongs to the DNA mismatch repair MutL/HexB family.

In terms of biological role, this protein is involved in the repair of mismatches in DNA. It is required for dam-dependent methyl-directed DNA mismatch repair. May act as a 'molecular matchmaker', a protein that promotes the formation of a stable complex between two or more DNA-binding proteins in an ATP-dependent manner without itself being part of a final effector complex. The chain is DNA mismatch repair protein MutL from Salmonella typhi.